A 135-amino-acid polypeptide reads, in one-letter code: Small ribosomal subunit protein uS12 (135 aa).

Position 89 is a 3-methylthioaspartic acid (Asp89). Residues 101 to 135 are disordered; it reads SLDTSGVADRKQSRSKYGAKQPKAGAAAPAKGKGR. Over residues 118–135 the composition is skewed to low complexity; it reads GAKQPKAGAAAPAKGKGR.

The protein belongs to the universal ribosomal protein uS12 family. In terms of assembly, part of the 30S ribosomal subunit. Contacts proteins S8 and S17. May interact with IF1 in the 30S initiation complex.

With S4 and S5 plays an important role in translational accuracy. In terms of biological role, interacts with and stabilizes bases of the 16S rRNA that are involved in tRNA selection in the A site and with the mRNA backbone. Located at the interface of the 30S and 50S subunits, it traverses the body of the 30S subunit contacting proteins on the other side and probably holding the rRNA structure together. The combined cluster of proteins S8, S12 and S17 appears to hold together the shoulder and platform of the 30S subunit. This Chlorobium limicola (strain DSM 245 / NBRC 103803 / 6330) protein is Small ribosomal subunit protein uS12.